A 518-amino-acid chain; its full sequence is ATP synthase subunit alpha (518 aa).

169–176 serves as a coordination point for ATP; it reads GDRKTGKT.

The protein belongs to the ATPase alpha/beta chains family. As to quaternary structure, F-type ATPases have 2 components, CF(1) - the catalytic core - and CF(0) - the membrane proton channel. CF(1) has five subunits: alpha(3), beta(3), gamma(1), delta(1), epsilon(1). CF(0) has three main subunits: a(1), b(2) and c(9-12). The alpha and beta chains form an alternating ring which encloses part of the gamma chain. CF(1) is attached to CF(0) by a central stalk formed by the gamma and epsilon chains, while a peripheral stalk is formed by the delta and b chains.

The protein localises to the cell membrane. It catalyses the reaction ATP + H2O + 4 H(+)(in) = ADP + phosphate + 5 H(+)(out). In terms of biological role, produces ATP from ADP in the presence of a proton gradient across the membrane. The alpha chain is a regulatory subunit. The chain is ATP synthase subunit alpha from Enterococcus hirae (strain ATCC 9790 / DSM 20160 / JCM 8729 / LMG 6399 / NBRC 3181 / NCIMB 6459 / NCDO 1258 / NCTC 12367 / WDCM 00089 / R).